We begin with the raw amino-acid sequence, 450 residues long: UPF0210 protein CPE1497 (450 aa).

Belongs to the UPF0210 family. As to quaternary structure, homodimer.

The sequence is that of UPF0210 protein CPE1497 from Clostridium perfringens (strain 13 / Type A).